The chain runs to 945 residues: 26S proteasome regulatory subunit RPN2 (945 aa).

An N-acetylserine modification is found at Ser-2. PC repeat units lie at residues 366-399 (TATASLGVIHKGNLLEGKKVMAPYLPGSRASSRF), 403-440 (GSLYGLGLIYAGFGRDTTDYLKNIIVENSGTSGDEDVD), 445-479 (GASLGIGLAAMGSANIEVYEALKEVLYNDSATSGE), 480-514 (AAALGMGLCMLGTGKPEAIHDMFTYSQETQHGNIT), 516-549 (GLAVGLALINYGRQELADDLITKMLASDESLLRY), 550-585 (GGAFTIALAYAGTGNNSAVKRLLHVAVSDSNDDVRR), 586-618 (AAVIALGFVLLRDYTTVPRIVQLLSKSHNAHVR), 620-654 (GTAFALGIACAGKGLQSAIDVLDPLTKDPVDFVRQ), 655-692 (AAMIALSMILIQQTEKLNPQVADINKNFLSVITNKHQE), and 698-734 (GACVAQGIMNAGGRNVTIQLENADTGTLDTKSVVGLV). Thr-801 is modified (phosphothreonine). Positions 810–819 (AKARAKKTKK) are enriched in basic residues. The tract at residues 810–851 (AKARAKKTKKEKGPNEEEKKKEHEEKEKERETNKKGIKETKE) is disordered. Basic and acidic residues predominate over residues 820-851 (EKGPNEEEKKKEHEEKEKERETNKKGIKETKE). Thr-932 carries the phosphothreonine modification.

It belongs to the proteasome subunit S1 family. As to quaternary structure, interacts with UBR1. Post-translationally, N-acetylated by NAT1.

Its function is as follows. Acts as a regulatory subunit of the 26S proteasome which is involved in the ATP-dependent degradation of ubiquitinated proteins. The sequence is that of 26S proteasome regulatory subunit RPN2 (RPN2) from Saccharomyces cerevisiae (strain ATCC 204508 / S288c) (Baker's yeast).